The sequence spans 299 residues: Oxygen-dependent coproporphyrinogen-III oxidase (299 aa).

Serine 92 is a substrate binding site. Histidine 96 and histidine 106 together coordinate Mn(2+). The active-site Proton donor is histidine 106. Substrate is bound at residue 108 to 110 (NVR). Mn(2+)-binding residues include histidine 145 and histidine 175. Residues 240 to 275 (YVEFNLVWDRGTLFGLQTGGRTESILMSMPPLVRWE) form an important for dimerization region. Position 258–260 (258–260 (GGR)) interacts with substrate.

Belongs to the aerobic coproporphyrinogen-III oxidase family. In terms of assembly, homodimer. Mn(2+) is required as a cofactor.

Its subcellular location is the cytoplasm. The catalysed reaction is coproporphyrinogen III + O2 + 2 H(+) = protoporphyrinogen IX + 2 CO2 + 2 H2O. The protein operates within porphyrin-containing compound metabolism; protoporphyrin-IX biosynthesis; protoporphyrinogen-IX from coproporphyrinogen-III (O2 route): step 1/1. Its function is as follows. Involved in the heme biosynthesis. Catalyzes the aerobic oxidative decarboxylation of propionate groups of rings A and B of coproporphyrinogen-III to yield the vinyl groups in protoporphyrinogen-IX. The polypeptide is Oxygen-dependent coproporphyrinogen-III oxidase (Escherichia fergusonii (strain ATCC 35469 / DSM 13698 / CCUG 18766 / IAM 14443 / JCM 21226 / LMG 7866 / NBRC 102419 / NCTC 12128 / CDC 0568-73)).